We begin with the raw amino-acid sequence, 94 residues long: Bacterial microcompartment shell protein PduA (94 aa).

Residues 5 to 89 (ALGMVETKGL…PHTDVEKILP (85 aa)) form the BMC domain.

It belongs to the bacterial microcompartments protein family. Homohexamer with a central pore of about 5.6 Angstroms in diameter. The hexamers pack against each other in arrays. Interacts with the N-terminus of PduP which targets PduP to the BMC. Modeling suggests PduC, PduD, PduE, PduL and PduP interact with a cleft formed by the C-terminal segments of 2 adjacent PduA subunits (on the BMC luminal side) in the hexamer.

Its subcellular location is the bacterial microcompartment. Its pathway is polyol metabolism; 1,2-propanediol degradation. Its function is as follows. One of the major shell proteins of the bacterial microcompartment (BMC) dedicated to 1,2-propanediol (1,2-PD) degradation. At least one of PduA or PduJ is required for BMC assembly; it must be encoded as the first gene in the pdu operon. Not required for structural integrity of BMCs, it is required to mitigate propionaldehyde toxicity. Controls diffusion of 1,2-PD into and propionaldehyde out of the BMC shell; residue 40 is particularly important for pore permeability. Overexpression of this protein leads to aberrant filaments that extend the length of the cell, cross the cleavage furrow and impair division. The filaments form nanotubes with a hollow center. The isolated BMC shell component protein ratio for J:A:B':B:K:T:U is approximately 15:10:7:6:1:1:2. Edge residues (particularly Lys-26) are important for function and assembly of the BMC, and influence array formation by hexamers. Interaction with PduA allows encapsulation of at least PduP in BMCs. Probably also targets PduD to the BMC. PduA is probably the hub for binding multiple enzymes to the interior of the BMC; modeling suggests PduC, PduD, PduE, PduG, PduL and PduP are targeted to PduA. In terms of biological role, the 1,2-PD-specific bacterial microcompartment (BMC) concentrates low levels of 1,2-PD catabolic enzymes, concentrates volatile reaction intermediates thus enhancing pathway flux and keeps the level of toxic, mutagenic propionaldehyde low. The protein is Bacterial microcompartment shell protein PduA of Salmonella typhimurium (strain LT2 / SGSC1412 / ATCC 700720).